Here is a 361-residue protein sequence, read N- to C-terminus: tRNA/tmRNA (uracil-C(5))-methyltransferase (361 aa).

S-adenosyl-L-methionine-binding residues include glutamine 183, tyrosine 211, asparagine 216, glutamate 232, and aspartate 294. Cysteine 319 acts as the Nucleophile in catalysis. The Proton acceptor role is filled by glutamate 353.

The protein belongs to the class I-like SAM-binding methyltransferase superfamily. RNA M5U methyltransferase family. TrmA subfamily.

The enzyme catalyses uridine(54) in tRNA + S-adenosyl-L-methionine = 5-methyluridine(54) in tRNA + S-adenosyl-L-homocysteine + H(+). The catalysed reaction is uridine(341) in tmRNA + S-adenosyl-L-methionine = 5-methyluridine(341) in tmRNA + S-adenosyl-L-homocysteine + H(+). In terms of biological role, dual-specificity methyltransferase that catalyzes the formation of 5-methyluridine at position 54 (m5U54) in all tRNAs, and that of position 341 (m5U341) in tmRNA (transfer-mRNA). This is tRNA/tmRNA (uracil-C(5))-methyltransferase from Acinetobacter baumannii (strain AB307-0294).